The chain runs to 339 residues: Glycerol-3-phosphate dehydrogenase [NAD(P)+] (339 aa).

Residues Ser15, Tyr16, His36, and Lys110 each contribute to the NADPH site. Residues Lys110, Gly139, and Thr141 each contribute to the sn-glycerol 3-phosphate site. Ala143 lines the NADPH pocket. Sn-glycerol 3-phosphate-binding residues include Lys195, Asp248, Ser258, Arg259, and Asn260. Lys195 serves as the catalytic Proton acceptor. Arg259 contributes to the NADPH binding site. NADPH contacts are provided by Val283 and Glu285.

It belongs to the NAD-dependent glycerol-3-phosphate dehydrogenase family.

The protein localises to the cytoplasm. It catalyses the reaction sn-glycerol 3-phosphate + NAD(+) = dihydroxyacetone phosphate + NADH + H(+). It carries out the reaction sn-glycerol 3-phosphate + NADP(+) = dihydroxyacetone phosphate + NADPH + H(+). It participates in membrane lipid metabolism; glycerophospholipid metabolism. In terms of biological role, catalyzes the reduction of the glycolytic intermediate dihydroxyacetone phosphate (DHAP) to sn-glycerol 3-phosphate (G3P), the key precursor for phospholipid synthesis. This Shigella dysenteriae serotype 1 (strain Sd197) protein is Glycerol-3-phosphate dehydrogenase [NAD(P)+].